The following is an 86-amino-acid chain: MVLQNDIDLLNPPAELEKLKHKKKRLVQSPNSFFMDVKCQGCFNITTVFSHSQTVVVCPGCQTVLCQPTGGKARLTEGCSFRRKGD.

The segment at 39-61 (CQGCFNITTVFSHSQTVVVCPGC) adopts a C4-type zinc-finger fold.

This sequence belongs to the eukaryotic ribosomal protein eS27 family. Zn(2+) serves as cofactor.

The chain is Small ribosomal subunit protein eS27 (RPS27) from Hordeum vulgare (Barley).